Here is a 203-residue protein sequence, read N- to C-terminus: Monothiol glutaredoxin-7 (203 aa).

Positions 1-32 (MAIVINKRNVRVLVITNLLLIVVFFVLRNSNA) are cleaved as a signal peptide. Residues 88-191 (AAEYNKIMEQ…DSFKKWSDGA (104 aa)) enclose the Glutaredoxin domain. [2Fe-2S] cluster is bound at residue C108.

This sequence belongs to the glutaredoxin family. Monothiol subfamily.

This is Monothiol glutaredoxin-7 (GRX7) from Saccharomyces cerevisiae (strain ATCC 204508 / S288c) (Baker's yeast).